The chain runs to 862 residues: Rab GTPase-binding effector protein 1 (862 aa).

Ala-2 carries the N-acetylalanine modification. The stretch at 11–345 (DVSLQQRVAE…KKTDTEEEVK (335 aa)) forms a coiled coil. Lys-282 bears the N6-acetyllysine mark. Positions 315–374 (ELKKKDQEEDEQQRVNKRKDNKKTDTEEEVKIPVVCALTQEESSTPLSNEEEHLDSTHGS) are disordered. The segment covering 336–345 (KKTDTEEEVK) has biased composition (basic and acidic residues). Phosphoserine is present on residues Ser-374, Ser-377, and Ser-407. Thr-408 bears the Phosphothreonine mark. Ser-410 carries the post-translational modification Phosphoserine. Positions 534–816 (DMCSNYEKQL…LQTELDVSEQ (283 aa)) form a coiled coil.

The protein belongs to the rabaptin family. As to quaternary structure, heterodimer with RABGEF1. The heterodimer binds RAB4A and RAB5A that have been activated by GTP-binding. Interacts with TSC2. Interacts with GGA1 (via GAE domain), GGA2 (via GAE domain) and GGA3 (via GAE domain). Interacts with AP1G1 (via GAE domain). Interacts with AP1G2 (via GAE domain). Interacts with ECPAS. Interacts with KCNH1. Interacts with PKD1 (via C-terminal domain) and GGA1; the interactions recruit PKD1:PKD2 complex to GGA1 and ARL3 at trans-Golgi network. Interacts with KCNH1. In terms of processing, proteolytic cleavage by caspases in apoptotic cells causes loss of endosome fusion activity.

It localises to the cytoplasm. Its subcellular location is the early endosome. The protein localises to the recycling endosome. It is found in the cytoplasmic vesicle. Rab effector protein acting as linker between gamma-adaptin, RAB4A and RAB5A. Involved in endocytic membrane fusion and membrane trafficking of recycling endosomes. Involved in KCNH1 channels trafficking to and from the cell membrane. Stimulates RABGEF1 mediated nucleotide exchange on RAB5A. Mediates the traffic of PKD1:PKD2 complex from the endoplasmic reticulum through the Golgi to the cilium. In Mus musculus (Mouse), this protein is Rab GTPase-binding effector protein 1 (Rabep1).